A 574-amino-acid polypeptide reads, in one-letter code: Amino-acid acetyltransferase, mitochondrial (574 aa).

Residues 1–13 (MWRRIFAHGLKYD) constitute a mitochondrion transit peptide. Positions 392 to 560 (KGAKPSNNSP…KRLREFMRSV (169 aa)) constitute an N-acetyltransferase domain.

The protein belongs to the acetyltransferase family. Interacts with the acetylglutamate kinase chain of AGR5,6.

The protein resides in the mitochondrion. It carries out the reaction L-glutamate + acetyl-CoA = N-acetyl-L-glutamate + CoA + H(+). It functions in the pathway amino-acid biosynthesis; L-arginine biosynthesis; N(2)-acetyl-L-ornithine from L-glutamate: step 1/4. Feedback inhibition by L-arginine. Functionally, N-acetylglutamate synthase involved in arginine biosynthesis. The polypeptide is Amino-acid acetyltransferase, mitochondrial (ARG2) (Saccharomyces cerevisiae (strain YJM789) (Baker's yeast)).